We begin with the raw amino-acid sequence, 79 residues long: Ribonuclease P protein component 1 (79 aa).

It belongs to the eukaryotic/archaeal RNase P protein component 1 family. Consists of a catalytic RNA component and at least 4-5 protein subunits.

The protein localises to the cytoplasm. The enzyme catalyses Endonucleolytic cleavage of RNA, removing 5'-extranucleotides from tRNA precursor.. Its function is as follows. Part of ribonuclease P, a protein complex that generates mature tRNA molecules by cleaving their 5'-ends. The chain is Ribonuclease P protein component 1 from Saccharolobus solfataricus (strain ATCC 35092 / DSM 1617 / JCM 11322 / P2) (Sulfolobus solfataricus).